A 126-amino-acid polypeptide reads, in one-letter code: Large ribosomal subunit protein uL22 (126 aa).

It belongs to the universal ribosomal protein uL22 family. Part of the 50S ribosomal subunit.

Its function is as follows. This protein binds specifically to 23S rRNA; its binding is stimulated by other ribosomal proteins, e.g. L4, L17, and L20. It is important during the early stages of 50S assembly. It makes multiple contacts with different domains of the 23S rRNA in the assembled 50S subunit and ribosome. Functionally, the globular domain of the protein is located near the polypeptide exit tunnel on the outside of the subunit, while an extended beta-hairpin is found that lines the wall of the exit tunnel in the center of the 70S ribosome. In Sphingopyxis alaskensis (strain DSM 13593 / LMG 18877 / RB2256) (Sphingomonas alaskensis), this protein is Large ribosomal subunit protein uL22.